Consider the following 325-residue polypeptide: MYIAVPAEILGIILPLLLGVAFLVLAERKVMAFVQRRKGPDVVGSFGLLQPLADGLKLILKEPISPSSANFFLFRMAPVATFMLSLVAWAVVPFDYGMVLSDLNIGLLYLFAISSLGVYGIIIAGWSSISKYAFLGALRSAAQMVSYEVSIGLILITVLICVGSCNLSEIVMAQKQIWFGIPLFPVLVMFFISCLAETNRAPFDLPEAEAELVAGYNVEYSSMGFALFFLGEYANMILMSGLCTLFFLGGWLPILDLPIFKKIPGSIWFSIKVLFFLFLYIWVRAAFPRYRYDQLMGLGWKVFLPLSLARVVPVSGLLVTFQWLP.

A run of 8 helical transmembrane segments spans residues 5 to 25 (VPAE…FLVL), 68 to 88 (SANF…SLVA), 105 to 125 (IGLL…IIAG), 144 to 164 (MVSY…CVGS), 177 to 197 (IWFG…CLAE), 227 to 247 (LFFL…TLFF), 263 to 283 (IPGS…YIWV), and 302 to 322 (VFLP…VTFQ).

It belongs to the complex I subunit 1 family. In terms of assembly, complex I is composed of at least 49 different subunits.

The protein localises to the mitochondrion inner membrane. The catalysed reaction is a ubiquinone + NADH + 5 H(+)(in) = a ubiquinol + NAD(+) + 4 H(+)(out). In terms of biological role, core subunit of the mitochondrial membrane respiratory chain NADH dehydrogenase (Complex I) that is believed to belong to the minimal assembly required for catalysis. Complex I functions in the transfer of electrons from NADH to the respiratory chain. The immediate electron acceptor for the enzyme is believed to be ubiquinone. This chain is NADH-ubiquinone oxidoreductase chain 1 (ND1), found in Arabidopsis thaliana (Mouse-ear cress).